We begin with the raw amino-acid sequence, 348 residues long: Phenylalanine--tRNA ligase alpha subunit (348 aa).

Glu262 contributes to the Mg(2+) binding site.

The protein belongs to the class-II aminoacyl-tRNA synthetase family. Phe-tRNA synthetase alpha subunit type 1 subfamily. Tetramer of two alpha and two beta subunits. It depends on Mg(2+) as a cofactor.

The protein localises to the cytoplasm. It catalyses the reaction tRNA(Phe) + L-phenylalanine + ATP = L-phenylalanyl-tRNA(Phe) + AMP + diphosphate + H(+). This chain is Phenylalanine--tRNA ligase alpha subunit, found in Streptococcus pneumoniae serotype 2 (strain D39 / NCTC 7466).